The chain runs to 505 residues: MDFGRSRDIISGLPDSLLCHILSFLNTKEAASTSVLAKKWRYLFASVPNLDFDDSVHLRLGKRNPAVSGEDYLKMINERSDQLSTSFMDFVDQVLRLQDNSPLHKFSLKIRDCVDIVRIICWILKVLERGVSDLELDMHLKWKSSLPSKIFLSETLVRLKLSVERGPFIDVEDVHLPKLKTLHIVSVKFEKHGIGLNKLLSGCHILEELNLEYISWCLWDFVSVSLTTLKRLTFCGEVMQDENPISVSFNTPNLVYLMFTDAIADEYSTVNFDSLVEAHINLQMSEDQVEQTRFSDSEGNMEGCMVANATELIMGICNVKILYLSVYTLEVLTYCCEAIPLFNNLTHLTIESNSEVGWESVSGLLKNSPNLETLVFKGLVHRFTDKCGDMCLCKPWEEDEEEEEDEETPTCLSSCPVKVLKILEFGKIYDDEIEKRIDQVKHFLEKIPDIEQLILHYNTPVDEDVIKVYQQLRRHPKVASSKCKLQLISDNLSLSSKDCALFGID.

An F-box domain is found at R7–S55.

This Arabidopsis thaliana (Mouse-ear cress) protein is Putative F-box protein At1g58310.